A 192-amino-acid chain; its full sequence is Adenylate kinase (192 aa).

12–17 is a binding site for ATP; the sequence is GSGKTT. The segment at 33–62 is NMP; the sequence is STGDLLRAEVAKDSELGKKIDKIISGGNLV. AMP-binding positions include T34, R39, 60–62, 87–90, and Q94; these read NLV and GYPR. Positions 129-135 are LID; sequence GRARGAD. ATP is bound at residue R130. The AMP site is built by R132 and R144. R172 contributes to the ATP binding site.

Belongs to the adenylate kinase family. Monomer.

The protein resides in the cytoplasm. The enzyme catalyses AMP + ATP = 2 ADP. The protein operates within purine metabolism; AMP biosynthesis via salvage pathway; AMP from ADP: step 1/1. Its function is as follows. Catalyzes the reversible transfer of the terminal phosphate group between ATP and AMP. Plays an important role in cellular energy homeostasis and in adenine nucleotide metabolism. The protein is Adenylate kinase of Campylobacter hominis (strain ATCC BAA-381 / DSM 21671 / CCUG 45161 / LMG 19568 / NCTC 13146 / CH001A).